Here is a 2594-residue protein sequence, read N- to C-terminus: MFWREDAAQQQQQQQQQQQQQQQQQQPPHPPKRLSFSFNVKIAVNVNTKMSTTHINQERSKQQTTTGSRSRSRSNSNSSVSCKGDGDRRVRRHTTRLVGLRQQLLHLGRQLNPGQFLVTGHGGISTILIANLLLLLLLSLCCNVCCRSHIEPDQNLTPTTTSPAAVAVVPMLLPLAQTHMRPQLDSDVVEKVAVWTKHVGAAPPSIAEGIAISSVVRMPPSIQTPTETVRRQEQQRQQQQQQQEAAAAAAADAAIDERIVLERVTRDCVQRCIVEEDLFLDEFGIKCEKADNSDKCYKTRCNKGCAQWYRALKEIEPCQEACASTQFYPYDMPCIGACETAQRDYWHMQRLAMARLVETTQPQLLEMTDESSTLTIKWAMQFPENYLASRPFNIQYQQVDNQSEPEWHNLADYDCDEYYVCEILEALVPYTRYKFRFELPFGESSEDVLYSPATPVYETPMEGAPISAPIIVALLALDEHHVFVHWRPGRYSNAPIEGYRVLLTSAGNTSREQLLPAQRTSCIFAQLQPLTNYTVALTMINKQGEGPSTVVSIVTKSPLEPQQLQSVLLASEHSIIWQSLEPAGETRLLYTSEPAAISDFTFSQREQRLWLLDELGQLHSQLLDETTTSAARRLRLELPSNGSSQWTPRKLSLDWLQRRLYIAAQANSSDGAEGGFELFSSNLEGGDVQMAGVQLGLVVEQLELDALNGWLFWCDADSLWRLDLSSKQQLRLTQPAGAPGRFMLEPQRWLLHVLLPQENQLLELSYDGGHKHALALSNDSWRGFAWSSDQAQLLLANETQLQLLDGQTLVPLANWSPDGGCCALLPLERRRQPLSLEPPAPRELRALLGAQGAHITWQPPAANPYQTATAAARNFSYELEVLDVASQSAYNIRNIRVPHFGLERLQADNLYQLRVRANNAAGRAGVWTAPLATRTWPLGDHRLRWATQRGSLYTTNELGGQLQPLPVQLASSPGPLALVNASVAYYVSGREQSLHCVNLLQPQLSCTDERLEHVGAVAYDWRGGLLYWTDLARDCVQRLDPFSGERELLPIFGARHLALDSAQGHLYYSSSAHLARRSLSALSTHQPELEYYHVNGLAGQISGFCLDLPQRHIYWLVAGNSALHLYRTALSAGGSQAAVPLQLLTTLPAADALPHTLQHLAPLGALLWLAADGRGAHLLRLAAQLETDTDTMRLLPEGLVEPLSAVQLLERSAGPPPPPPDEGVRPLAVPPDSVHIDEGGHWNDFRVRWQPAASGGNHSVCYKLLLEHGSERLITLELLTPFARITQLAQAPLGLRISITPHTAWRAGSTTRVQLDTPVAAPTQPRRLRVFVERQAAPLQLAPNVSALLRWDVPEEHAGSQSLQYRISCWRGSELHSELLLNQSTLEARVEHLQPEETYRFQVQAHVAATGLAAGATSHALHVSPEVQSVPRLLYANAEHIGELDLDTGHRKQLVHTASPVEHLVVLQGEQRLLWVNEHVELLSHVPGKAPAKLARMRAEVLALTVDWVQRIVYWAELDAADGGCVIYSLDLCRFDGRILQGERLWSTPRGQLLRDLVALPHARQLVWLQHDLDSRNATLQGRSLANGSALTFEGVTLPLWRLFEGSQEPLAETLNLVDHLGRLCVYHVARQLCTSSALRAQLNLLNDDIGQLAQDPGYLYALRNGSVRAYGRRRQQLEFLLELQPDEVRLLRAYNYQAYPSRRCLLLPTTAAALESTPSSCEETQCSLQLPALSAAPDCPLPVPGLNYQLNLSSSSRSAQLELRSLHSAAGLTLNISQLQPYQAYELRAQVGSYYQQQLGQEPLQLPVLTLHTAAATPSAPRNFSGRALSPSELELSWLAPLELRSASVYYTLHWQLQLEDTEEQSQEQPAQEQRVETAGVQRLTGLQPARLYQVWLQAHATPSKYNSSGRLLIRSYAPLPPLQLIELNAYGMTLAWPGTPDALSSLTLECQSLREQLQFNVAGNHTQMRLAPLQPKTRYSCRLALAYAATPGAPIYFGPSHEYETLGDAPSAPGRPQLEHIAGEIFRVSWTPALDNGSPILLYNLEALQARRTNRRRRRRRETTLSLLPWAEEPLVIEDQWLDFCNTTELSCIVRELHTRRLLLFRVRARNRPHGWGPYSEDSERIAEPFVSPEKRGSLVLAIIAPAAIVSSCVLALVLVRKLQKRRHRAKKLLQQSRPSIWSNLSALQTQQQLLAARSRTFSMSLSDADIALLPQINWNRLTLLRFLGSGAFGEVYEGQLQAEDEAQPQRVAIKSLRKGASEFAELLQEAQLMSNFKHENIVCLIGICCDTDSISLIMEHMEAGDLLSYLRAARPSSQEALSKLQLPELLSMCLDVANGCSYMEDMHFVHRDLACRNCLVSDGAAIGGRRIVKIGDFGLARDIYKSDYYRKEGEGLLPVRWMALESLVDGLFSTQSDVWAFGVLCWEIFTLGQQPYAARNNFEVLAHVKEGGRLQQPERCPEKLYALLLQCWRSEPWERPSFKRCLSTLQALSSDLRRTEMLATDETPLVSALCAFKPDAKVRFDDAPQRLTLHLDAKDTVSTTDADTTGSPTTPTAPTTPTTTTSTIAVVSTAPSSENGQLYANEGISGL.

2 disordered regions span residues 1–34 (MFWR…PKRL) and 49–92 (KMST…RVRR). The Extracellular portion of the chain corresponds to 1-2141 (MFWREDAAQQ…FVSPEKRGSL (2141 aa)). The span at 9–26 (QQQQQQQQQQQQQQQQQQ) shows a compositional bias: low complexity. N-linked (GlcNAc...) asparagine glycosylation is found at asparagine 77, asparagine 401, asparagine 508, asparagine 532, asparagine 641, asparagine 667, asparagine 778, asparagine 797, asparagine 874, and asparagine 980. 2 Fibronectin type-III domains span residues 358–462 (ETTQ…TPME) and 468–560 (APII…SPLE). Residues 838 to 938 (PPAPRELRAL…APLATRTWPL (101 aa)) enclose the Fibronectin type-III 3 domain. The stretch at 1024 to 1066 (GLLYWTDLARDCVQRLDPFSGERELLPIFGARHLALDSAQGHL) is one LDL-receptor class B repeat. 2 Fibronectin type-III domains span residues 1227-1317 (LAVP…QLDT) and 1324-1430 (QPRR…VQSV). Asparagine 1257, asparagine 1344, asparagine 1382, asparagine 1577, asparagine 1587, asparagine 1665, asparagine 1752, asparagine 1776, asparagine 1824, asparagine 1908, asparagine 1966, and asparagine 2088 each carry an N-linked (GlcNAc...) asparagine glycan. 4 Fibronectin type-III domains span residues 1711–1814 (TAAA…TLHT), 1821–1920 (APRN…SYAP), 1922–2010 (PPLQ…TLGD), and 2014–2132 (APGR…AEPF). A helical membrane pass occupies residues 2142 to 2162 (VLAIIAPAAIVSSCVLALVLV). The Cytoplasmic segment spans residues 2163 to 2594 (RKLQKRRHRA…LYANEGISGL (432 aa)). A Protein kinase domain is found at 2224 to 2495 (LTLLRFLGSG…KRCLSTLQAL (272 aa)). Residues 2230–2238 (LGSGAFGEV) and lysine 2257 each bind ATP. Aspartate 2355 acts as the Proton acceptor in catalysis. A Phosphotyrosine; by autocatalysis modification is found at tyrosine 2391. The disordered stretch occupies residues 2543–2568 (TVSTTDADTTGSPTTPTAPTTPTTTT). The span at 2545–2568 (STTDADTTGSPTTPTAPTTPTTTT) shows a compositional bias: low complexity.

Belongs to the protein kinase superfamily. Tyr protein kinase family. Insulin receptor subfamily.

The protein localises to the cell membrane. The enzyme catalyses L-tyrosyl-[protein] + ATP = O-phospho-L-tyrosyl-[protein] + ADP + H(+). Its function is as follows. Receptor for an extracellular signal required to instruct a cell to differentiate into a R7 photoreceptor. The ligand for Sev is the Boss (Bride of Sevenless) protein. This chain is Protein sevenless (sev), found in Drosophila virilis (Fruit fly).